We begin with the raw amino-acid sequence, 113 residues long: Large ribosomal subunit protein uL22 (113 aa).

It belongs to the universal ribosomal protein uL22 family. As to quaternary structure, part of the 50S ribosomal subunit.

Functionally, this protein binds specifically to 23S rRNA; its binding is stimulated by other ribosomal proteins, e.g. L4, L17, and L20. It is important during the early stages of 50S assembly. It makes multiple contacts with different domains of the 23S rRNA in the assembled 50S subunit and ribosome. Its function is as follows. The globular domain of the protein is located near the polypeptide exit tunnel on the outside of the subunit, while an extended beta-hairpin is found that lines the wall of the exit tunnel in the center of the 70S ribosome. In Opitutus terrae (strain DSM 11246 / JCM 15787 / PB90-1), this protein is Large ribosomal subunit protein uL22.